The primary structure comprises 318 residues: NADH-quinone oxidoreductase subunit H 2 (318 aa).

9 consecutive transmembrane segments (helical) span residues 4–24, 77–97, 106–126, 146–166, 179–199, 214–234, 238–258, 262–282, and 293–313; these read LLIA…AGVF, LAPA…AFAP, VGVL…VLGA, LAYE…AGSF, LWFI…GLAA, LVAG…FLGE, ILLV…GPIL, VWFG…RAAL, and FAWK…AWIA.

The protein belongs to the complex I subunit 1 family. In terms of assembly, NDH-1 is composed of 14 different subunits. Subunits NuoA, H, J, K, L, M, N constitute the membrane sector of the complex.

It is found in the cell inner membrane. The enzyme catalyses a quinone + NADH + 5 H(+)(in) = a quinol + NAD(+) + 4 H(+)(out). NDH-1 shuttles electrons from NADH, via FMN and iron-sulfur (Fe-S) centers, to quinones in the respiratory chain. The immediate electron acceptor for the enzyme in this species is believed to be ubiquinone. Couples the redox reaction to proton translocation (for every two electrons transferred, four hydrogen ions are translocated across the cytoplasmic membrane), and thus conserves the redox energy in a proton gradient. This subunit may bind ubiquinone. The sequence is that of NADH-quinone oxidoreductase subunit H 2 from Cereibacter sphaeroides (strain ATCC 17029 / ATH 2.4.9) (Rhodobacter sphaeroides).